Reading from the N-terminus, the 131-residue chain is Small ribosomal subunit protein uS11 (131 aa).

Belongs to the universal ribosomal protein uS11 family. As to quaternary structure, part of the 30S ribosomal subunit. Interacts with proteins S7 and S18. Binds to IF-3. Interacts with VmlR. Interacts with BrxC.

Located on the platform of the 30S subunit, it bridges several disparate RNA helices of the 16S rRNA. Forms part of the Shine-Dalgarno cleft in the 70S ribosome. This chain is Small ribosomal subunit protein uS11, found in Bacillus subtilis (strain 168).